We begin with the raw amino-acid sequence, 47 residues long: Large ribosomal subunit protein eL40 (47 aa).

This sequence belongs to the eukaryotic ribosomal protein eL40 family.

The chain is Large ribosomal subunit protein eL40 from Halobacterium salinarum (strain ATCC 29341 / DSM 671 / R1).